The sequence spans 208 residues: N-(5'-phosphoribosyl)anthranilate isomerase (208 aa).

This sequence belongs to the TrpF family.

It catalyses the reaction N-(5-phospho-beta-D-ribosyl)anthranilate = 1-(2-carboxyphenylamino)-1-deoxy-D-ribulose 5-phosphate. Its pathway is amino-acid biosynthesis; L-tryptophan biosynthesis; L-tryptophan from chorismate: step 3/5. This Methanothrix thermoacetophila (strain DSM 6194 / JCM 14653 / NBRC 101360 / PT) (Methanosaeta thermophila) protein is N-(5'-phosphoribosyl)anthranilate isomerase.